Here is a 112-residue protein sequence, read N- to C-terminus: Large ribosomal subunit protein uL18 (112 aa).

Belongs to the universal ribosomal protein uL18 family. Part of the 50S ribosomal subunit; part of the 5S rRNA/L5/L18/L25 subcomplex. Contacts the 5S and 23S rRNAs.

In terms of biological role, this is one of the proteins that bind and probably mediate the attachment of the 5S RNA into the large ribosomal subunit, where it forms part of the central protuberance. This chain is Large ribosomal subunit protein uL18, found in Thermus thermophilus (strain ATCC BAA-163 / DSM 7039 / HB27).